We begin with the raw amino-acid sequence, 326 residues long: Methionine import ATP-binding protein MetN (326 aa).

The ABC transporter domain maps to 1-226 (MVFYTIGPQT…PQQPITRQFV (226 aa)). Residue 23 to 30 (GYSGAGKS) participates in ATP binding.

It belongs to the ABC transporter superfamily. Methionine importer (TC 3.A.1.24) family. As to quaternary structure, the complex is composed of two ATP-binding proteins (MetN), two transmembrane proteins (MetI) and a solute-binding protein (MetQ).

Its subcellular location is the cell inner membrane. It carries out the reaction L-methionine(out) + ATP + H2O = L-methionine(in) + ADP + phosphate + H(+). It catalyses the reaction D-methionine(out) + ATP + H2O = D-methionine(in) + ADP + phosphate + H(+). Part of the ABC transporter complex MetNIQ involved in methionine import. Responsible for energy coupling to the transport system. This Erwinia pyrifoliae (strain DSM 12162 / Ep1/96) protein is Methionine import ATP-binding protein MetN.